The following is a 485-amino-acid chain: MADLINILNHFVQEQPEAVAVRHTNDELTYKQLDEESSKLAHLLQDSKKPMILYGHMSPYMIVGMIGAIKSGCGYVPIDTSVPKERVNMIIDKVQPEIIFNTSDETLEQTNAQVLKVSDIQDSQYPIVFDSQMKQNDVVYTIFTSGSTGEPKGVQIEYASLNEFAEWMVSLNKTGTGKEWLNQAPFSFDLSVMAIYPCLTSGGTLNLVDKDMIKKPKLLNEMLVQTPMNVWVSTPSFIEMCLLLPNLNEQQYNSLKQFFFCGEILSHKTAKVLVERFPNSMIYNTYGPTEATVAVTSIQITEEILNQYNPLPVGVARPGTRLFATEEGELVIEGQSVSLGYLKNEEKTAAVFNFEDGVRTYHTGDKAKIEDGLWFIQGRIDFQIKLNGYRMELEEIETQLRQSKHVREAVVVPVYKNGKVVHLIGAVVPTESVEDNLAMTTQIKHELKSRLPEYMIPRKFEWMERLPLTLNGKLDRKKIAEVVNG.

Residue 144-145 coordinates ATP; sequence TS. Residue aspartate 189 participates in D-alanine binding. 284–289 lines the ATP pocket; that stretch reads NTYGPT. Valine 293 contributes to the D-alanine binding site. Aspartate 365 and lysine 473 together coordinate ATP. Lysine 473 contributes to the D-alanine binding site.

Belongs to the ATP-dependent AMP-binding enzyme family. DltA subfamily.

The protein localises to the cytoplasm. It catalyses the reaction holo-[D-alanyl-carrier protein] + D-alanine + ATP = D-alanyl-[D-alanyl-carrier protein] + AMP + diphosphate. It functions in the pathway cell wall biogenesis; lipoteichoic acid biosynthesis. Functionally, catalyzes the first step in the D-alanylation of lipoteichoic acid (LTA), the activation of D-alanine and its transfer onto the D-alanyl carrier protein (Dcp) DltC. In an ATP-dependent two-step reaction, forms a high energy D-alanyl-AMP intermediate, followed by transfer of the D-alanyl residue as a thiol ester to the phosphopantheinyl prosthetic group of the Dcp. D-alanylation of LTA plays an important role in modulating the properties of the cell wall in Gram-positive bacteria, influencing the net charge of the cell wall. The protein is D-alanine--D-alanyl carrier protein ligase of Staphylococcus epidermidis (strain ATCC 35984 / DSM 28319 / BCRC 17069 / CCUG 31568 / BM 3577 / RP62A).